Here is a 348-residue protein sequence, read N- to C-terminus: MNGTEGPNFYVPFSNKTGVVRSPFEEPQYYLAEPWQFSCLAAYMFMLIVLGFPINFLTLYVTIQHKKLRTPLNYILLNLAIADLFMVFGGFTTTLYTSLHGYFVFGPTGCDLEGFFATLGGEIALWSLVVLAIERYIVVCKPMSNFRFGENHAIMGVAFTWVMALACAAPPLVGWSRYIPEGMQCSCGIDYYTLKPEVNNESFVIYMFVVHFTIPMVVIFFCYGQLVFTVKEAAAQQQESATTQKAEKEVTRMVIIMVIAFLICWLPYAGVAFYIFTHQGSNFGPILMTLPAFFAKTSAVYNPVIYIMLNKQFRTCMLTTLCCGKIPLGDDEASATASKTETSQVAPA.

Met1 bears the N-acetylmethionine mark. Over Met1 to Gln36 the chain is Extracellular. Asn2 and Asn15 each carry an N-linked (GlcNAc...) asparagine glycan. The chain crosses the membrane as a helical span at residues Phe37–Val61. Over Thr62–Asn73 the chain is Cytoplasmic. Residues Tyr74 to Tyr96 traverse the membrane as a helical segment. The Extracellular segment spans residues Thr97–Cys110. Residues Cys110 and Cys187 are joined by a disulfide bond. The chain crosses the membrane as a helical span at residues Asp111 to Ile133. A 'Ionic lock' involved in activated form stabilization motif is present at residues Glu134 to Tyr136. Topologically, residues Glu134–His152 are cytoplasmic. A helical membrane pass occupies residues Ala153–Val173. Residues Gly174 to Ser202 lie on the Extracellular side of the membrane. Residue Glu201 coordinates Zn(2+). Residues Phe203 to Gly224 traverse the membrane as a helical segment. Over Gln225–Arg252 the chain is Cytoplasmic. The helical transmembrane segment at Met253–Tyr274 threads the bilayer. Residues Ile275–Ile286 are Extracellular-facing. Gln279 contacts Zn(2+). Residues Leu287–Met308 form a helical membrane-spanning segment. The residue at position 296 (Lys296) is an N6-(retinylidene)lysine. Residues Leu309–Ala348 are Cytoplasmic-facing. Residues Cys322 and Cys323 are each lipidated (S-palmitoyl cysteine). Residues Asp330–Ala348 form an interaction with SAG region. Ser334 is modified (phosphoserine). Phosphothreonine is present on Thr336. Ser338 carries the post-translational modification Phosphoserine. Phosphothreonine occurs at positions 340 and 342. Position 343 is a phosphoserine (Ser343).

This sequence belongs to the G-protein coupled receptor 1 family. Opsin subfamily. In terms of assembly, homodimer. May form a complex composed of RHO, GRK1 and RCVRN in a Ca(2+)-dependent manner; RCVRN prevents the interaction between GRK1 and RHO. Interacts with GRK1. Interacts (phosphorylated form) with SAG. Interacts with GNAT1. Interacts with GNAT3. SAG and G-proteins compete for a common binding site. Interacts with PRCD; the interaction promotes PRCD stability. Forms a complex with ASAP1 and ARF4. Forms a complex with ASAP1, RAB11A, Rabin8/RAB3IP, ARF4 and RAB11FIP3; the complex regulates Golgi-to-cilia rhodopsin/RHO transport in photoreceptors. Phosphorylated on some or all of the serine and threonine residues present in the C-terminal region. In terms of processing, contains one covalently linked retinal chromophore. Upon light absorption, the covalently bound 11-cis-retinal is converted to all-trans-retinal. After hydrolysis of the Schiff base and release of the covalently bound all-trans-retinal, active rhodopsin is regenerated by binding of a fresh molecule of 11-cis-retinal.

It localises to the membrane. Its subcellular location is the cell projection. The protein resides in the cilium. The protein localises to the photoreceptor outer segment. Its function is as follows. Photoreceptor required for image-forming vision at low light intensity. Required for photoreceptor cell viability after birth. Light-induced isomerization of 11-cis to all-trans retinal triggers a conformational change that activates signaling via G-proteins. Subsequent receptor phosphorylation mediates displacement of the bound G-protein alpha subunit by the arrestin SAG and terminates signaling. The protein is Rhodopsin (RHO) of Caluromys philander (Bare-tailed woolly opossum).